The following is a 457-amino-acid chain: Chromosomal replication initiator protein DnaA (457 aa).

The tract at residues 1-75 (MDAQLNNLWE…ALKIVTSRKF (75 aa)) is domain I, interacts with DnaA modulators. The interval 75-118 (FKIEFYLESDLEEEKENEEKQKEEKKDNTNDVDGSIVVSDEMSA) is domain II. Residues 87–108 (EEKENEEKQKEEKKDNTNDVDG) form a disordered region. Residues 91 to 103 (NEEKQKEEKKDNT) show a composition bias toward basic and acidic residues. The tract at residues 119 to 335 (TLNPKYTFQS…GALIRIIAYS (217 aa)) is domain III, AAA+ region. Residues glycine 163, glycine 165, lysine 166, and threonine 167 each contribute to the ATP site. Residues 336-457 (SLTNRDVSVD…NDITKKLTQK (122 aa)) form a domain IV, binds dsDNA region.

Belongs to the DnaA family. Oligomerizes as a right-handed, spiral filament on DNA at oriC.

The protein localises to the cytoplasm. Its function is as follows. Plays an essential role in the initiation and regulation of chromosomal replication. ATP-DnaA binds to the origin of replication (oriC) to initiate formation of the DNA replication initiation complex once per cell cycle. Binds the DnaA box (a 9 base pair repeat at the origin) and separates the double-stranded (ds)DNA. Forms a right-handed helical filament on oriC DNA; dsDNA binds to the exterior of the filament while single-stranded (ss)DNA is stabiized in the filament's interior. The ATP-DnaA-oriC complex binds and stabilizes one strand of the AT-rich DNA unwinding element (DUE), permitting loading of DNA polymerase. After initiation quickly degrades to an ADP-DnaA complex that is not apt for DNA replication. Binds acidic phospholipids. This is Chromosomal replication initiator protein DnaA from Clostridium perfringens (strain SM101 / Type A).